A 283-amino-acid polypeptide reads, in one-letter code: Zinc import ATP-binding protein ZnuC (283 aa).

One can recognise an ABC transporter domain in the interval 13–228 (VEMRNAGVHR…PEYVRLFGAR (216 aa)). Residue 45 to 52 (GPNGSGKS) coordinates ATP. The segment at 264–283 (HHHDHARDGGQGGGGHGHAG) is disordered. A compositionally biased stretch (gly residues) spans 272 to 283 (GGQGGGGHGHAG).

The protein belongs to the ABC transporter superfamily. Zinc importer (TC 3.A.1.15.5) family. As to quaternary structure, the complex is composed of two ATP-binding proteins (ZnuC), two transmembrane proteins (ZnuB) and a solute-binding protein (ZnuA).

The protein localises to the cell inner membrane. It carries out the reaction Zn(2+)(out) + ATP(in) + H2O(in) = Zn(2+)(in) + ADP(in) + phosphate(in) + H(+)(in). Part of the ABC transporter complex ZnuABC involved in zinc import. Responsible for energy coupling to the transport system. The protein is Zinc import ATP-binding protein ZnuC of Chelativorans sp. (strain BNC1).